A 145-amino-acid polypeptide reads, in one-letter code: MYPAHLLVLLAVCVSLLGASAIPPLPLNLVQFTYLIQCANKGSRASYHYADYGCYCGAGGSGTPVDELDRCCKVHDDCYGEAEKMGCYPKLTMYNYYCGTEGPYCNTKTDCQRYVCACDLQAAKCFARSPYNNKNYNIDTSKRCK.

An N-terminal signal peptide occupies residues 1-21; sequence MYPAHLLVLLAVCVSLLGASA. The propeptide occupies 22 to 27; that stretch reads IPPLPL. 7 disulfides stabilise this stretch: C38-C98, C54-C144, C56-C72, C71-C125, C78-C118, C87-C111, and C105-C116. Ca(2+) is bound by residues Y55, G57, and G59. The active site involves H75. D76 contacts Ca(2+). Residue D119 is part of the active site.

This sequence belongs to the phospholipase A2 family. Group I subfamily. D49 sub-subfamily. The cofactor is Ca(2+). Expressed by the venom gland.

It localises to the secreted. It catalyses the reaction a 1,2-diacyl-sn-glycero-3-phosphocholine + H2O = a 1-acyl-sn-glycero-3-phosphocholine + a fatty acid + H(+). PLA2 catalyzes the calcium-dependent hydrolysis of the 2-acyl groups in 3-sn-phosphoglycerides. The polypeptide is Basic phospholipase A2 cL038 (Laticauda semifasciata (Black-banded sea krait)).